A 217-amino-acid chain; its full sequence is MCEKSQTIKELLNAIRTLVVKNNKAKVSMIEKELLAFVSELDKKFKQQLNNFNELQQKIPLLQKANEEFALKFERMQREAQNQIQAKLDELNLKNKKELEQAKKYAIAKTLDQPLNIIDQFEIALSYAQKDPQVKNYTTGFTMVLDAFSRWLEANGVTKIKIEPGMEFDEKIMSALELVDSNLAKNKVVRVSKSGYKLYDKVIRFASVFVSKGNKKS.

It belongs to the GrpE family. Homodimer.

The protein localises to the cytoplasm. Functionally, participates actively in the response to hyperosmotic and heat shock by preventing the aggregation of stress-denatured proteins, in association with DnaK and GrpE. It is the nucleotide exchange factor for DnaK and may function as a thermosensor. Unfolded proteins bind initially to DnaJ; upon interaction with the DnaJ-bound protein, DnaK hydrolyzes its bound ATP, resulting in the formation of a stable complex. GrpE releases ADP from DnaK; ATP binding to DnaK triggers the release of the substrate protein, thus completing the reaction cycle. Several rounds of ATP-dependent interactions between DnaJ, DnaK and GrpE are required for fully efficient folding. The sequence is that of Protein GrpE from Mycoplasma genitalium (strain ATCC 33530 / DSM 19775 / NCTC 10195 / G37) (Mycoplasmoides genitalium).